Reading from the N-terminus, the 409-residue chain is CUB domain-containing protein (409 aa).

The signal sequence occupies residues 1–18 (MFLFSLTVLSALVLITES). Positions 154–229 (TEASTTAQET…TTAPTTAPAP (76 aa)) are enriched in low complexity. The interval 154–230 (TEASTTAQET…TAPTTAPAPI (77 aa)) is disordered. Cysteine 232 and cysteine 257 are joined by a disulfide. The region spanning 232 to 338 (CGGVLRGRGT…QEYVDYYYYD (107 aa)) is the CUB domain. Positions 389–409 (VQGAADSESEASASSESSDED) are disordered. The segment covering 392–409 (AADSESEASASSESSDED) has biased composition (low complexity).

As to expression, component of the acid-insoluble and acid-soluble organic matrix of the aragonitic skeleton (at protein level).

The protein localises to the secreted. The protein is CUB domain-containing protein of Acropora millepora (Staghorn coral).